A 66-amino-acid polypeptide reads, in one-letter code: Venom protein 27.1 (66 aa).

An N-terminal signal peptide occupies residues Met-1–Ala-22.

Contains 1 disulfide bond. In terms of tissue distribution, expressed by the venom gland.

It localises to the secreted. The sequence is that of Venom protein 27.1 from Lychas mucronatus (Chinese swimming scorpion).